Here is a 321-residue protein sequence, read N- to C-terminus: Protein stand still (321 aa).

Coiled-coil stretches lie at residues 74-103 and 147-167; these read KLHE…RKKA and KQEQ…KANL. Basic and acidic residues predominate over residues 146–162; that stretch reads HKQEQEGATRKLEDSTS. Disordered regions lie at residues 146–166 and 227–248; these read HKQE…DKAN and QVPP…MEDV. Over residues 235–244 the composition is skewed to low complexity; it reads SKSSGSLASS. Positions 272–292 form a coiled coil; it reads QRDVLQRLERSMAQISQELHC.

In terms of tissue distribution, germ cells specific. Expressed in all germ cells. During the first instar larvae, it is expressed in all germ cells of both sexes. In third instar larvae, it decreases in male germ cells while it remains in female germ cells. In adult ovary, it is expressed in cells of the germarium, including the stem cells. In the early previtellogenic stages, it is highly expressed in the nurse cells. During vitellogenesis, it is not translocated into the maturing egg. In testes, it is only expressed during some steps of male germline differentiation. At the apex testis, it is expressed at low level in stem cells and dividing spermatogonia, while in newly formed 16-cell cysts of primary spermatocytes, it is transiently but strongly expressed before vanishing during spermatocyte growth phase.

The protein localises to the nucleus. Its function is as follows. Essential in the female germline for proper survival, sex determination and differentiation. Participates in the transcriptional activation of Otu. Does not regulate the expression of Ovo. The polypeptide is Protein stand still (stil) (Drosophila melanogaster (Fruit fly)).